We begin with the raw amino-acid sequence, 443 residues long: Exodeoxyribonuclease 7 large subunit (443 aa).

The protein belongs to the XseA family. Heterooligomer composed of large and small subunits.

It is found in the cytoplasm. The enzyme catalyses Exonucleolytic cleavage in either 5'- to 3'- or 3'- to 5'-direction to yield nucleoside 5'-phosphates.. Bidirectionally degrades single-stranded DNA into large acid-insoluble oligonucleotides, which are then degraded further into small acid-soluble oligonucleotides. The sequence is that of Exodeoxyribonuclease 7 large subunit from Stenotrophomonas maltophilia (strain R551-3).